The chain runs to 200 residues: MESHNTLNLDMEKDQEKAFDYSKRAQWLRAAVLGANDGLVSTASLMMGVGAVKQNVKIMILTGFAGLVAGACSMAIGEFVSVYSQYDIEVAQMKRETGGEIEKEKLPSPTQAAAASALAFSLGAMVPLLAAAFVKEYKVRIGAIVAAVTLALVMFGWLGAVLGKAPVVKSSLRVLVGGWLAMAITYGFTKLIGSHSHMYV.

Over M1–A31 the chain is Cytoplasmic. Residues V32–V52 traverse the membrane as a helical segment. The Vacuolar segment spans residues K53–M59. The chain crosses the membrane as a helical span at residues I60–V80. Residues S81 to A113 lie on the Cytoplasmic side of the membrane. A helical membrane pass occupies residues A114 to V134. At K135 to R140 the chain is on the vacuolar side. A helical transmembrane segment spans residues I141 to V161. Over L162–R173 the chain is Cytoplasmic. A helical transmembrane segment spans residues V174–S194. Residues H195–V200 lie on the Vacuolar side of the membrane.

The protein belongs to the CCC1 family.

It is found in the vacuole membrane. It catalyses the reaction Fe(2+)(in) = Fe(2+)(out). Functionally, probable vacuolar iron transporter that may be involved in the regulation of iron distribution throughout the plant. This Arabidopsis thaliana (Mouse-ear cress) protein is Vacuolar iron transporter homolog 3.